The sequence spans 1399 residues: DNA-directed RNA polymerase subunit beta' (1399 aa).

Cys-70, Cys-72, Cys-85, and Cys-88 together coordinate Zn(2+). Mg(2+)-binding residues include Asp-460, Asp-462, and Asp-464. Zn(2+) is bound by residues Cys-814, Cys-888, Cys-895, and Cys-898.

It belongs to the RNA polymerase beta' chain family. As to quaternary structure, the RNAP catalytic core consists of 2 alpha, 1 beta, 1 beta' and 1 omega subunit. When a sigma factor is associated with the core the holoenzyme is formed, which can initiate transcription. It depends on Mg(2+) as a cofactor. The cofactor is Zn(2+).

It carries out the reaction RNA(n) + a ribonucleoside 5'-triphosphate = RNA(n+1) + diphosphate. In terms of biological role, DNA-dependent RNA polymerase catalyzes the transcription of DNA into RNA using the four ribonucleoside triphosphates as substrates. The chain is DNA-directed RNA polymerase subunit beta' from Pseudomonas fluorescens (strain ATCC BAA-477 / NRRL B-23932 / Pf-5).